Reading from the N-terminus, the 839-residue chain is Sodium/hydrogen exchanger 3 (839 aa).

An N-terminal signal peptide occupies residues 1–32 (MPLGVRGTRREFRFPVWGLLLLALWMLPRALG). Topologically, residues 33–56 (VEEIPGPDSHEKQGFQIVTFKWHH) are extracellular. Residues 57-79 (VQDPYIIALWILVASLAKIVFHL) form a helical membrane-spanning segment. At 80–87 (SHKVTSVV) the chain is on the cytoplasmic side. A helical transmembrane segment spans residues 88–107 (PESALLIVLGLILGGIVWAA). Over 108–116 (DHIASFTLT) the chain is Extracellular. The helical transmembrane segment at 117–134 (PTVFFFYLLPPIVLDAGY) threads the bilayer. Over 135-137 (FMP) the chain is Cytoplasmic. A helical membrane pass occupies residues 138 to 173 (NRLFFGNLGTILLYAVIGTVWNAATTGLSLYGVYLS). A 1,2-diacyl-sn-glycero-3-phospho-(1D-myo-inositol)-binding residues include Gly-143, Gly-146, and Thr-147. Residues 174 to 186 (GIMGDLSIGLLDF) lie on the Extracellular side of the membrane. Residues 187–208 (LLFGSLIAAVDPVAVLAVFEEV) traverse the membrane as a helical segment. Residues 209–210 (HV) are Cytoplasmic-facing. Residues 211 to 242 (NDVLFIIVFGESLLNDAVTVVLYNVFDSFVSL) traverse the membrane as a helical segment. Over 243–249 (GADKVTG) the chain is Extracellular. A helical membrane pass occupies residues 250–284 (VDCVKGIVSFFVVSLGGTLIGIIFAFLLSLVTRFT). Residues 285-286 (KH) are Cytoplasmic-facing. Residues 287–309 (VRIIEPGFVFIISYLSYLTSEML) traverse the membrane as a helical segment. At 310-311 (SL) the chain is on the extracellular side. The chain crosses the membrane as a helical span at residues 312-328 (SAILAITFCGICCQKYV). Residues 329–335 (KANISEQ) are Cytoplasmic-facing. Residues 336–364 (SATTVRYTMKMLASGAETIIFMFLGISAV) form a helical membrane-spanning segment. The Extracellular portion of the chain corresponds to 365-372 (DPAIWTWN). The chain crosses the membrane as a helical span at residues 373–394 (TAFILLTLVFISVYRAIGVVLQ). At 395-407 (TWLLNKYRMVQLE) the chain is on the cytoplasmic side. An a 1,2-diacyl-sn-glycero-3-phospho-(1D-myo-inositol)-binding site is contributed by Met-403. Residues 408–431 (IIDQVVMSYGGLRGAVAYALVVLL) traverse the membrane as a helical segment. The Extracellular portion of the chain corresponds to 432-438 (DEKKVKE). The helical transmembrane segment at 439 to 472 (KNLFVSTTIIVVFFTVIFQGLTIKPLVQWLKVKK) threads the bilayer. Residues 473–839 (SEHREPKLNE…RSFLPESTHM (367 aa)) lie on the Cytoplasmic side of the membrane. A 1,2-diacyl-sn-glycero-3-phospho-(1D-myo-inositol) contacts are provided by Gln-502, Ile-503, and His-505. 2 positions are modified to phosphoserine: Ser-560 and Ser-568. The interaction with EZR stretch occupies residues 581-595 (RPSTVEASVSYLLRE). Residues 596 to 673 (NVSTVCLDMQ…RKRLESFKST (78 aa)) are interaction with NHERF4. An interaction with AHCYL1 region spans residues 597–701 (VSTVCLDMQA…GQKRRNSSIP (105 aa)). 2 positions are modified to phosphoserine: Ser-598 and Ser-613. Ser-669 carries the post-translational modification Phosphoserine; by SGK1. A compositionally biased stretch (basic residues) spans 688–697 (KRERGQKRRN). Residues 688-710 (KRERGQKRRNSSIPNGKIPMESP) form a disordered region. A phosphoserine mark is found at Ser-724, Ser-815, and Ser-818.

This sequence belongs to the monovalent cation:proton antiporter 1 (CPA1) transporter (TC 2.A.36) family. As to quaternary structure, homodimer. Found in the forms of complex and dynamic macromolecular complexes. Binds NHERF1 and NHERF2. Interacts with CHP1, CHP2 and SHANK2. Interacts with NHERF4 and interactions decrease in response to elevated calcium ion levels. Interacts with PDZK1 (via C-terminal PDZ domain). Interacts with AHCYL1; the interaction is required for SLC9A3 activity. Interacts with EZR; interaction targets SLC9A3 to the apical membrane. Interacts with SNX27 (via PDZ domains); directs SLC9A3 membrane insertion from early endosomes to the plasma membrane. Post-translationally, phosphorylated by PKA, which inhibits activity. Phosphorylation at Ser-669 by SGK1 is associated with increased abundance at the cell membrane.

The protein localises to the apical cell membrane. The protein resides in the cell membrane. Its subcellular location is the recycling endosome membrane. It localises to the early endosome membrane. The enzyme catalyses Na(+)(in) + H(+)(out) = Na(+)(out) + H(+)(in). With respect to regulation, seems to switch between active and inactive modes in response to various stimuli. Activated directly or indirectly by membrane phosphatidylinositol (PIs). Regulated by a variety of auxiliary proteins, which facilitate the maturation, cell surface expression and function of the transporter. Inhibited specifically by the drug tenapanor. Its function is as follows. Plasma membrane Na(+)/H(+) antiporter. Exchanges intracellular H(+) ions for extracellular Na(+) in 1:1 stoichiometry, playing a key role in salt and fluid absorption and pH homeostasis. Major apical Na(+)/H(+) exchanger in kidney and intestine playing an important role in renal and intestine Na(+) absorption and blood pressure regulation. The polypeptide is Sodium/hydrogen exchanger 3 (SLC9A3) (Didelphis virginiana (North American opossum)).